We begin with the raw amino-acid sequence, 329 residues long: Acetyl-coenzyme A carboxylase carboxyl transferase subunit alpha (329 aa).

One can recognise a CoA carboxyltransferase C-terminal domain in the interval 40–294 (QLESLAARRR…RAALERHLGE (255 aa)).

Belongs to the AccA family. In terms of assembly, acetyl-CoA carboxylase is a heterohexamer composed of biotin carboxyl carrier protein (AccB), biotin carboxylase (AccC) and two subunits each of ACCase subunit alpha (AccA) and ACCase subunit beta (AccD).

The protein localises to the cytoplasm. The enzyme catalyses N(6)-carboxybiotinyl-L-lysyl-[protein] + acetyl-CoA = N(6)-biotinyl-L-lysyl-[protein] + malonyl-CoA. Its pathway is lipid metabolism; malonyl-CoA biosynthesis; malonyl-CoA from acetyl-CoA: step 1/1. Its function is as follows. Component of the acetyl coenzyme A carboxylase (ACC) complex. First, biotin carboxylase catalyzes the carboxylation of biotin on its carrier protein (BCCP) and then the CO(2) group is transferred by the carboxyltransferase to acetyl-CoA to form malonyl-CoA. The protein is Acetyl-coenzyme A carboxylase carboxyl transferase subunit alpha of Parasynechococcus marenigrum (strain WH8102).